The chain runs to 231 residues: Putative cobalt transport protein CbiM 2 (231 aa).

Transmembrane regions (helical) follow at residues 8 to 28 (LPIG…IYGI), 41 to 61 (VLPL…LKIP), 75 to 95 (LSAA…VLLF), 108 to 128 (LGAN…LVFV), 136 to 156 (VGIG…TYTV), and 176 to 196 (IAFA…EGII).

This sequence belongs to the CbiM family. As to quaternary structure, forms an energy-coupling factor (ECF) transporter complex composed of an ATP-binding protein (A component, CbiO), a transmembrane protein (T component, CbiQ) and 2 possible substrate-capture proteins (S components, CbiM and CbiN) of unknown stoichimetry.

It localises to the cell membrane. The protein operates within cofactor biosynthesis; adenosylcobalamin biosynthesis. Functionally, part of the energy-coupling factor (ECF) transporter complex CbiMNOQ involved in cobalt import. In Methanocorpusculum labreanum (strain ATCC 43576 / DSM 4855 / Z), this protein is Putative cobalt transport protein CbiM 2.